The following is a 136-amino-acid chain: ATP synthase epsilon chain (136 aa).

It belongs to the ATPase epsilon chain family. As to quaternary structure, F-type ATPases have 2 components, CF(1) - the catalytic core - and CF(0) - the membrane proton channel. CF(1) has five subunits: alpha(3), beta(3), gamma(1), delta(1), epsilon(1). CF(0) has three main subunits: a, b and c.

Its subcellular location is the cell membrane. Its function is as follows. Produces ATP from ADP in the presence of a proton gradient across the membrane. This Ureaplasma parvum serovar 3 (strain ATCC 27815 / 27 / NCTC 11736) protein is ATP synthase epsilon chain.